The primary structure comprises 373 residues: Meiosis-specific kinetochore protein (373 aa).

Disordered regions lie at residues 1-91 (MWPL…QDEK) and 250-276 (STPE…LTST). A compositionally biased stretch (basic and acidic residues) spans 77–91 (SLQENRSSEDTQDEK). The short motif at 275–277 (STP) is the POLO box domain (PBD)-binding element. Residues 332–335 (EICC) form a required for localization to kinetochores region.

In terms of assembly, interacts with CENPC. Interacts with PLK1; required for recruitment of PLK1 at kinetochores.

It is found in the chromosome. The protein resides in the centromere. It localises to the kinetochore. Its function is as follows. Key regulator of kinetochore function during meiosis I: required both for mono-orientation of kinetochores on sister chromosomes and protection of centromeric cohesin from separase-mediated cleavage. Acts by facilitating kinetochore mono-orientation during meiosis I, when kinetochores on sister chromosomes face the same direction and are thus captured and pulled by spindle fibers from the same pole. Also required to prevent cleavage of cohesin at centromeres during meiosis I, possibly by acting as a regulator of the shugoshin-dependent protection pathway. Acts in collaboration with PLK1: required for PLK1 enrichment to kinetochores. Not required during meiosis II or mitosis. The protein is Meiosis-specific kinetochore protein of Homo sapiens (Human).